Here is a 157-residue protein sequence, read N- to C-terminus: S-ribosylhomocysteine lyase (157 aa).

3 residues coordinate Fe cation: His-54, His-58, and Cys-126.

The protein belongs to the LuxS family. In terms of assembly, homodimer. Fe cation serves as cofactor.

The enzyme catalyses S-(5-deoxy-D-ribos-5-yl)-L-homocysteine = (S)-4,5-dihydroxypentane-2,3-dione + L-homocysteine. In terms of biological role, involved in the synthesis of autoinducer 2 (AI-2) which is secreted by bacteria and is used to communicate both the cell density and the metabolic potential of the environment. The regulation of gene expression in response to changes in cell density is called quorum sensing. Catalyzes the transformation of S-ribosylhomocysteine (RHC) to homocysteine (HC) and 4,5-dihydroxy-2,3-pentadione (DPD). The chain is S-ribosylhomocysteine lyase from Bacillus velezensis (strain DSM 23117 / BGSC 10A6 / LMG 26770 / FZB42) (Bacillus amyloliquefaciens subsp. plantarum).